Reading from the N-terminus, the 333-residue chain is Transaldolase (333 aa).

K136 serves as the catalytic Schiff-base intermediate with substrate.

This sequence belongs to the transaldolase family. Type 1 subfamily. Homodimer.

The protein resides in the cytoplasm. The catalysed reaction is D-sedoheptulose 7-phosphate + D-glyceraldehyde 3-phosphate = D-erythrose 4-phosphate + beta-D-fructose 6-phosphate. It functions in the pathway carbohydrate degradation; pentose phosphate pathway; D-glyceraldehyde 3-phosphate and beta-D-fructose 6-phosphate from D-ribose 5-phosphate and D-xylulose 5-phosphate (non-oxidative stage): step 2/3. Functionally, transaldolase is important for the balance of metabolites in the pentose-phosphate pathway. The sequence is that of Transaldolase from Acidobacterium capsulatum (strain ATCC 51196 / DSM 11244 / BCRC 80197 / JCM 7670 / NBRC 15755 / NCIMB 13165 / 161).